We begin with the raw amino-acid sequence, 514 residues long: ATP synthase subunit alpha (514 aa).

170–177 (GDRQTGKT) contacts ATP.

Belongs to the ATPase alpha/beta chains family. As to quaternary structure, F-type ATPases have 2 components, CF(1) - the catalytic core - and CF(0) - the membrane proton channel. CF(1) has five subunits: alpha(3), beta(3), gamma(1), delta(1), epsilon(1). CF(0) has three main subunits: a(1), b(2) and c(9-12). The alpha and beta chains form an alternating ring which encloses part of the gamma chain. CF(1) is attached to CF(0) by a central stalk formed by the gamma and epsilon chains, while a peripheral stalk is formed by the delta and b chains.

Its subcellular location is the cell inner membrane. The catalysed reaction is ATP + H2O + 4 H(+)(in) = ADP + phosphate + 5 H(+)(out). Functionally, produces ATP from ADP in the presence of a proton gradient across the membrane. The alpha chain is a regulatory subunit. The protein is ATP synthase subunit alpha of Psychrobacter sp. (strain PRwf-1).